A 687-amino-acid polypeptide reads, in one-letter code: A-kinase anchor protein 8 (687 aa).

Residues 1–195 (MEQGYGGYGA…FLRGRGQGRF (195 aa)) form an interaction with MCM2 region. The interval 1 to 210 (MEQGYGGYGA…SSTFIRSDPF (210 aa)) is interaction with DPY30. Position 72 is a phosphoserine (S72). Disordered regions lie at residues 105–124 (KEGGRGGISSGGEGVQDRDS) and 185–218 (GFLRGRGQGRFQDRSNSSTFIRSDPFMPPSASEP). R109 is modified (asymmetric dimethylarginine; alternate). R109 carries the omega-N-methylarginine; alternate modification. Residues 109–118 (RGGISSGGEG) show a composition bias toward gly residues. An interaction with DDX5 region spans residues 109–201 (RGGISSGGEG…QGRFQDRSNS (93 aa)). S199 carries the post-translational modification Phosphoserine. An omega-N-methylarginine mark is found at R232 and R276. A disordered region spans residues 277–379 (SQTRIRDWPR…KQRRRDRMRD (103 aa)). Basic and acidic residues-rich tracts occupy residues 280–294 (RIRDWPRRRGFERFG) and 311–320 (PDAKLARADS). The Bipartite nuclear localization signal motif lies at 286–303 (RRRGFERFGPDNMGRKRK). K314 is covalently cross-linked (Glycyl lysine isopeptide (Lys-Gly) (interchain with G-Cter in SUMO2)). Phosphoserine is present on residues S320, S325, and S336. Residues 321-331 (DGDLSENDDGA) are compositionally biased toward acidic residues. Basic and acidic residues predominate over residues 335 to 357 (RSGDEEFRGEDDLCDSRKQRGEK). Residues 384–447 (RIQFACSVCK…NKKIEKRRQE (64 aa)) form an involved in chromatin-binding region. 2 C2H2 AKAP95-type zinc fingers span residues 389–411 (CSVCKFRSFEDEEIQKHLQSKFH) and 478–501 (CLACDMLIPAQHQLLQRHLHSVDH). An involved in condensin complex recruitment region spans residues 522–565 (SVLNNKHIVKMLEKYLKGEDPFVNETADLETEGDENVGEEKEET). Position 552 is a phosphothreonine (T552). The tract at residues 568–585 (EVAAEVLAEVITAAVKAV) is RII-binding. The interval 572–589 (EVLAEVITAAVKAVEGEG) is required for interaction with MYCBP. Residues 624 to 659 (QTCEAASETRSIEDKTRGEAAEARNEAAMPTADAGS) are disordered. A compositionally biased stretch (basic and acidic residues) spans 633-648 (RSIEDKTRGEAAEARN). S659 carries the phosphoserine modification.

The protein belongs to the AKAP95 family. As to quaternary structure, binds to the PKA RII-alpha regulatory subunit PRKAR2A. Interacts (via C-terminus) with FIGN. Interacts with NCAPD2, CCND3, CCNE1, MCM2, RPS6KA1, DDX5, PDE4A. Interacts with MYCBP; MYCBP is translocated to the nucleus and the interaction prevents the association of the PKA catalytic subunit leading to suppression of PKA activity. Interacts with CCND1, CASP3. Interacts with NFKB1; detetcted in the cytoplasm. Interacts with DPY30; mediating AKAP8 association with at least the MLL4/WBP7 HMT complex. Interacts with HDAC3; increased during mitosis. Interacts with GJA1; in the nucleus and in the nuclear membrane; the nuclear association increases with progress of cell cycle G1, S and G2 phase and decreases in M phase. Post-translationally, phosphorylated on tyrosine residues probably by SRC subfamily protein kinases; multiple phosphorylation is leading to dissociation from nuclear structures implicated in chromatin structural changes.

It is found in the nucleus matrix. The protein resides in the nucleus. The protein localises to the nucleolus. It localises to the cytoplasm. Its function is as follows. Anchoring protein that mediates the subcellular compartmentation of cAMP-dependent protein kinase (PKA type II). Acts as an anchor for a PKA-signaling complex onto mitotic chromosomes, which is required for maintenance of chromosomes in a condensed form throughout mitosis. Recruits condensin complex subunit NCAPD2 to chromosomes required for chromatin condensation; the function appears to be independent from PKA-anchoring. Specifically involved in recruitment of CAPD2 to, and condensation of maternal but not paternal chromosomes. May help to deliver cyclin D/E to CDK4 to facilitate cell cycle progression. Required for cell cycle G2/M transition and histone deacetylation during mitosis. In mitotic cells recruits HDAC3 to the vicinity of chromatin leading to deacetylation and subsequent phosphorylation at 'Ser-10' of histone H3; in this function may act redundantly with AKAP8L. Involved in nuclear retention of RPS6KA1 upon ERK activation thus inducing cell proliferation. May be involved in regulation of DNA replication by acting as scaffold for MCM2. Enhances HMT activity of the KMT2 family MLL4/WBP7 complex and is involved in transcriptional regulation. In a teratocarcinoma cell line is involved in retinoic acid-mediated induction of developmental genes implicating H3 'Lys-4' methylation. May be involved in recruitment of active CASP3 to the nucleus in apoptotic cells. May act as a carrier protein of GJA1 for its transport to the nucleus. May play a repressive role in the regulation of rDNA transcription. Preferentially binds GC-rich DNA in vitro. In cells, associates with ribosomal RNA (rRNA) chromatin, preferentially with rRNA promoter and transcribed regions. Involved in modulation of Toll-like receptor signaling. Required for the cAMP-dependent suppression of TNF-alpha in early stages of LPS-induced macrophage activation; the function probably implicates targeting of PKA to NFKB1. The chain is A-kinase anchor protein 8 (Akap8) from Mus musculus (Mouse).